Consider the following 449-residue polypeptide: Glucose-6-phosphate isomerase (449 aa).

E291 (proton donor) is an active-site residue. Residues H312 and K426 contribute to the active site.

Belongs to the GPI family.

The protein resides in the cytoplasm. It carries out the reaction alpha-D-glucose 6-phosphate = beta-D-fructose 6-phosphate. The protein operates within carbohydrate biosynthesis; gluconeogenesis. Its pathway is carbohydrate degradation; glycolysis; D-glyceraldehyde 3-phosphate and glycerone phosphate from D-glucose: step 2/4. Functionally, catalyzes the reversible isomerization of glucose-6-phosphate to fructose-6-phosphate. This is Glucose-6-phosphate isomerase from Streptococcus pyogenes serotype M49 (strain NZ131).